The following is a 238-amino-acid chain: Probable transcriptional regulatory protein VPA0011 (238 aa).

It belongs to the TACO1 family.

Its subcellular location is the cytoplasm. This chain is Probable transcriptional regulatory protein VPA0011, found in Vibrio parahaemolyticus serotype O3:K6 (strain RIMD 2210633).